Consider the following 218-residue polypeptide: N-(5'-phosphoribosyl)anthranilate isomerase (218 aa).

It belongs to the TrpF family.

The enzyme catalyses N-(5-phospho-beta-D-ribosyl)anthranilate = 1-(2-carboxyphenylamino)-1-deoxy-D-ribulose 5-phosphate. The protein operates within amino-acid biosynthesis; L-tryptophan biosynthesis; L-tryptophan from chorismate: step 3/5. In Rhodopseudomonas palustris (strain BisA53), this protein is N-(5'-phosphoribosyl)anthranilate isomerase.